The primary structure comprises 705 residues: Choline transporter-like protein 2 (705 aa).

Topologically, residues 1 to 31 (MEDQRKYGAYGTPQKYDPTFKGPIYNRGCTD) are cytoplasmic. The residue at position 12 (threonine 12) is a Phosphothreonine. A helical membrane pass occupies residues 32–52 (VLCCVLLFLAIVGYVAVGLIA). Residues 53-231 (WTHGDPRKVI…RIFEDYTVSW (179 aa)) lie on the Extracellular side of the membrane. N-linked (GlcNAc...) asparagine glycans are attached at residues asparagine 186 and asparagine 199. Residues 232–252 (YWIVIGLVIAMVLSLLFIILL) form a helical membrane-spanning segment. The Cytoplasmic portion of the chain corresponds to 253–255 (RFL). The helical transmembrane segment at 256–276 (AGIMVWVMIVLVILVLGYGIF) threads the bilayer. The Extracellular segment spans residues 277–314 (HCYMEYARLRGEAGSDISVLDLGFQTDFRVYLHLRQTW). Residues 315–335 (LAFMIILSILEVIIILLLIFL) form a helical membrane-spanning segment. Residues 336-363 (RKRILIAIALIKEASRAVGYVMCSLLYP) are Cytoplasmic-facing. A helical transmembrane segment spans residues 364–384 (LVTFFLLCLCIAYWASTAVFL). Residues 385 to 455 (STSNEAVYKI…IFNAFMFFWL (71 aa)) are Extracellular-facing. N-linked (GlcNAc...) asparagine glycosylation occurs at asparagine 414. A helical membrane pass occupies residues 456–478 (ANFVLALGQVTLAGAFASYYWAL). At 479-503 (RKPDDMPAFPLFAAFGRALRYHTGS) the chain is on the cytoplasmic side. The chain crosses the membrane as a helical span at residues 504–524 (LAFGSLILAIVQIIRVILEYL). At 525-562 (DQRLKAAENKFAKFLMTCLKCCFWCLEKFIKFLNRNAY) the chain is on the extracellular side. A helical membrane pass occupies residues 563–583 (IMIAIYGTNFCTSARNAFFLL). Residues 584-598 (MRNIIRVAVLDKVTD) are Cytoplasmic-facing. Residues 599–619 (FLFLLGKLLIVGSVGILAFFF) traverse the membrane as a helical segment. Topologically, residues 620–637 (FTHRIRIVQDTAPPLNYY) are extracellular. The helical transmembrane segment at 638-658 (WVPILTVIVGSYLIAHGFFSV) threads the bilayer. Topologically, residues 659-705 (YGMCVDTLFLCFLEDLERNNGSSERPYFMSSTLKKLLNKTNKKPVES) are cytoplasmic.

This sequence belongs to the CTL (choline transporter-like) family. As to quaternary structure, interacts with COCH. N-glycosylated; contains sialic acid. Not O-glycosylated. Expressed at high levels in lung, colon and in supporting cells of the inner ear (at protein level). Progressively lower levels in brain, tongue, liver and kidney (at protein level). In the tongue, strongly expressed in epithelial cells and in nerves within the musculature. Within the nerves, expression observed in the perineurial cells of the nerve sheath, in the Schwann cells and myelinated nerve fibers (at protein level). In the kidney, prominent expression in glomeruli in the lining of Bowman's capsule and on the mesangial cells adjacent to the vessels within the glomerulus (at protein level). Strongly expressed on the membranes of splenocytes (at protein level).

The protein resides in the cell membrane. Its subcellular location is the mitochondrion outer membrane. The enzyme catalyses choline(out) + n H(+)(in) = choline(in) + n H(+)(out). It catalyses the reaction ethanolamine(out) + n H(+)(in) = ethanolamine(in) + n H(+)(out). Functionally, choline/H+ antiporter, mainly in mitochodria. Also acts as a low-affinity ethanolamine/H+ antiporter, regulating the supply of extracellular ethanolamine (Etn) for the CDP-Etn pathway, redistribute intracellular Etn and balance the CDP-Cho and CDP-Etn arms of the Kennedy pathway. The polypeptide is Choline transporter-like protein 2 (SLC44A2) (Cavia porcellus (Guinea pig)).